Here is a 465-residue protein sequence, read N- to C-terminus: Nucleolar and spindle-associated protein 1 (465 aa).

Positions 32 to 61 (ADKLLRALKAHLKNEARKENENQDEIQTSA) form a coiled coil. 3 disordered regions span residues 44–123 (KNEA…QNHS), 148–207 (VEVP…TPNF), and 252–294 (GVPA…GSAK). Residues 56–75 (EIQTSASSCDEPEIQTSSQE) show a composition bias toward polar residues. The segment covering 76–86 (QAEREPDDHVT) has biased composition (basic and acidic residues). A compositionally biased stretch (basic residues) spans 87 to 96 (KTRGRRKTVH). Position 152 is a phosphoserine (Ser152). Polar residues predominate over residues 154–166 (PNESQGDENTVSS). The segment covering 169 to 179 (HGIDGNEDPRV) has biased composition (basic and acidic residues). Thr204 bears the Phosphothreonine mark. Residues 262-405 (GRLSVACTPG…HKGKLKPWGQ (144 aa)) form an interaction with microtubules region. The residue at position 265 (Ser265) is a Phosphoserine. The residue at position 269 (Thr269) is a Phosphothreonine. Ser272, Ser292, Ser299, and Ser334 each carry phosphoserine. The disordered stretch occupies residues 308–338 (SAATKDNEHKRSLTKTPARKSPHVTTSVNTP). Phosphothreonine occurs at positions 337, 361, and 372. 2 positions are modified to phosphoserine: Ser375 and Ser386. Residues 396–454 (HKGKLKPWGQSKENNSLHEHVNRVSFHKKTYKQPRLQTREEQRKKHERERKEKKEKVLG) are disordered. Positions 407-413 (KENNSLH) match the KEN box motif. Residues 430–457 (RLQTREEQRKKHERERKEKKEKVLGVRR) are a coiled coil. Residues 432 to 453 (QTREEQRKKHERERKEKKEKVL) show a composition bias toward basic and acidic residues.

The protein belongs to the NUSAP family. Interacts with DNA and microtubules. Microtubule bundling is inhibited by IPO7, KPNA2 and KPNB1 while association with DNA is also inhibited by IPO7 and KPNA2. Post-translationally, ubiquitinated. Ubiquitination by FZR1 may lead to proteasome-dependent degradation of this protein.

It localises to the cytoplasm. Its subcellular location is the nucleus. The protein localises to the nucleolus. It is found in the cytoskeleton. The protein resides in the spindle. It localises to the chromosome. Its function is as follows. Microtubule-associated protein with the capacity to bundle and stabilize microtubules. May associate with chromosomes and promote the organization of mitotic spindle microtubules around them. The polypeptide is Nucleolar and spindle-associated protein 1 (NUSAP1) (Bos taurus (Bovine)).